The chain runs to 97 residues: Co-chaperonin GroES (97 aa).

Belongs to the GroES chaperonin family. As to quaternary structure, heptamer of 7 subunits arranged in a ring. Interacts with the chaperonin GroEL.

The protein resides in the cytoplasm. Functionally, together with the chaperonin GroEL, plays an essential role in assisting protein folding. The GroEL-GroES system forms a nano-cage that allows encapsulation of the non-native substrate proteins and provides a physical environment optimized to promote and accelerate protein folding. GroES binds to the apical surface of the GroEL ring, thereby capping the opening of the GroEL channel. This is Co-chaperonin GroES from Nocardioides sp. (strain ATCC BAA-499 / JS614).